Here is a 158-residue protein sequence, read N- to C-terminus: MGFIIAIAKRFDALVGPGVMLLYPLYASFRAIESPTMLDDQQWLTYWIIYSLITIFELSVWRVLAWLPFWPYLKLLFCMWLVLPMFSGAAYIYSNFVRQYVKIGMNVGGGTNYTDEQRRVLQMMSLDARKSVQDYVDRFGWDSVEKAIKAAEKETRKH.

A run of 3 helical transmembrane segments spans residues Gly2–Leu22, Gln41–Trp61, and Val63–Leu83.

Belongs to the DP1 family.

Its subcellular location is the membrane. The protein is HVA22-like protein f (HVA22F) of Arabidopsis thaliana (Mouse-ear cress).